Reading from the N-terminus, the 102-residue chain is Small ribosomal subunit protein uS10 (102 aa).

Belongs to the universal ribosomal protein uS10 family. Part of the 30S ribosomal subunit.

Its function is as follows. Involved in the binding of tRNA to the ribosomes. The protein is Small ribosomal subunit protein uS10 of Bacillus anthracis (strain A0248).